Reading from the N-terminus, the 728-residue chain is U-box domain-containing protein 4 (728 aa).

A U-box domain is found at 296-370 (SVPKEFSCPI…SQWCGVYGLQ (75 aa)). ARM repeat units follow at residues 441-483 (GAIP…EQEG) and 526-568 (GAVE…ESCA).

It carries out the reaction S-ubiquitinyl-[E2 ubiquitin-conjugating enzyme]-L-cysteine + [acceptor protein]-L-lysine = [E2 ubiquitin-conjugating enzyme]-L-cysteine + N(6)-ubiquitinyl-[acceptor protein]-L-lysine.. Its pathway is protein modification; protein ubiquitination. Functionally, possesses E3 ubiquitin-protein ligase in vitro. The chain is U-box domain-containing protein 4 (PUB4) from Oryza sativa subsp. japonica (Rice).